The primary structure comprises 142 residues: Large ribosomal subunit protein uL11 (142 aa).

This sequence belongs to the universal ribosomal protein uL11 family. In terms of assembly, part of the ribosomal stalk of the 50S ribosomal subunit. Interacts with L10 and the large rRNA to form the base of the stalk. L10 forms an elongated spine to which L12 dimers bind in a sequential fashion forming a multimeric L10(L12)X complex. One or more lysine residues are methylated.

In terms of biological role, forms part of the ribosomal stalk which helps the ribosome interact with GTP-bound translation factors. The polypeptide is Large ribosomal subunit protein uL11 (Brucella abortus (strain S19)).